The following is a 447-amino-acid chain: Divalent metal cation transporter MntH (447 aa).

A run of 11 helical transmembrane segments spans residues 26–48, 65–85, 108–128, 140–160, 169–189, 212–232, 264–284, 304–324, 359–379, 383–403, and 426–446; these read AGFW…GYMD, TLLS…AMSA, GFLL…AEII, IPLI…LLLM, AIVA…VLLS, MLYL…LYLG, LFLA…LFYG, IVGA…LLAS, VLSV…EAKI, LTFS…PLVI, and TATI…LGLI.

Belongs to the NRAMP family.

Its subcellular location is the cell membrane. Functionally, h(+)-stimulated, divalent metal cation uptake system. This is Divalent metal cation transporter MntH from Pediococcus pentosaceus (strain ATCC 25745 / CCUG 21536 / LMG 10740 / 183-1w).